The chain runs to 309 residues: tRNA dimethylallyltransferase (309 aa).

13–20 provides a ligand contact to ATP; the sequence is GPTAVGKS. Substrate is bound at residue 15–20; the sequence is TAVGKS.

It belongs to the IPP transferase family. Monomer. The cofactor is Mg(2+).

It catalyses the reaction adenosine(37) in tRNA + dimethylallyl diphosphate = N(6)-dimethylallyladenosine(37) in tRNA + diphosphate. In terms of biological role, catalyzes the transfer of a dimethylallyl group onto the adenine at position 37 in tRNAs that read codons beginning with uridine, leading to the formation of N6-(dimethylallyl)adenosine (i(6)A). The chain is tRNA dimethylallyltransferase from Lacticaseibacillus casei (strain BL23) (Lactobacillus casei).